The chain runs to 155 residues: MSRRGTAEEKTAKSDPIYRNRLVNMLVNRILKHGKKSLAYQIIYRAVKKIQQKTETNPLSVLRQAIRGVTPDIAVKARRVGGSTHQVPIEIGSTQGKALAIRWLLGASRKRPGRNMAFKLSSELVDAAKGSGDAIRKKEETHKMAEANRAFAHFR.

This sequence belongs to the universal ribosomal protein uS7 family. As to quaternary structure, part of the 30S ribosomal subunit.

The protein resides in the plastid. It localises to the chloroplast. Its function is as follows. One of the primary rRNA binding proteins, it binds directly to 16S rRNA where it nucleates assembly of the head domain of the 30S subunit. The polypeptide is Small ribosomal subunit protein uS7c (rps7) (Butomus umbellatus (Flowering rush)).